The chain runs to 427 residues: MEAMAASTSLPDPGDFDRNVPRICGVCGDRATGFHFNAMTCEGCKGFFRRSMKRKALFTCPFNGDCRITKDNRRHCQACRLKRCVDIGMMKEFILTDEEVQRKREMILKRKEEEALKDSLRPKLSEEQQRIIAILLDAHHKTYDPTYSDFCQFRPPVRVNDGGGSHPSRPNSRHTPSFSGDSSSCCSDHYITSPDMMDSSSFSNLDLSEEDSDDPSLTLELSQLSMLPHLADLVSYSIQKVIGFAKMIPGFRDLTSEDQIVLLKSSAIEVIMLRSNESFTMDDMSWTCGNPDYKYRISDVTKAGHNLELIEPLIKFQVGLKKLNLHEEEHVLLMAICIVSPDRPGVQDAALIEAIQDRLSNTLQTYIRCRHPPPGSHLLYAKMIQKLADLRSLNEEHSKQYRCLSFQPESSMKLTPLVLEVFGNEIS.

The nuclear receptor DNA-binding region spans 21–96 (PRICGVCGDR…IGMMKEFILT (76 aa)). Zn(2+) contacts are provided by C24, C27, C41, C44, C60, C66, C76, and C79. 2 consecutive NR C4-type zinc fingers follow at residues 24–44 (CGVCGDRATGFHFNAMTCEGC) and 60–84 (CPFNGDCRITKDNRRHCQACRLKRC). The tract at residues 97–126 (DEEVQRKREMILKRKEEEALKDSLRPKLSE) is hinge. Residues 127–423 (EQQRIIAILL…LTPLVLEVFG (297 aa)) enclose the NR LBD domain. Y143 contributes to the calcitriol binding site. Residues 158–183 (RVNDGGGSHPSRPNSRHTPSFSGDSS) are disordered. S237 lines the calcitriol pocket. The interval 246–264 (KMIPGFRDLTSEDQIVLLK) is interaction with coactivator LXXLL motif. The calcitriol site is built by R274, S278, H305, and H397. The short motif at 416 to 424 (PLVLEVFGN) is the 9aaTAD element.

Belongs to the nuclear hormone receptor family. NR1 subfamily. As to quaternary structure, homodimer in the absence of bound vitamin D3. Heterodimer with RXRA after vitamin D3 binding. Interacts with MED1, NCOA1, NCOA2, NCOA3 and NCOA6 coactivators, leading to a strong increase of transcription of target genes. Interacts with the corepressor NCOR1. Interacts with SNW1. Interacts with IRX4, the interaction does not affect its transactivation activity. In terms of processing, ubiquitinated by UBR5, leading to its degradation: UBR5 specifically recognizes and binds ligand-bound VDR when it is not associated with coactivators (NCOAs). In presence of NCOAs, the UBR5-degron is not accessible, preventing its ubiquitination and degradation.

It is found in the nucleus. The protein resides in the cytoplasm. Nuclear receptor for calcitriol, the active form of vitamin D3 which mediates the action of this vitamin on cells. Enters the nucleus upon vitamin D3 binding where it forms heterodimers with the retinoid X receptor/RXR. The VDR-RXR heterodimers bind to specific response elements on DNA and activate the transcription of vitamin D3-responsive target genes. Plays a central role in calcium homeostasis. This Saguinus oedipus (Cotton-top tamarin) protein is Vitamin D3 receptor (VDR).